Consider the following 320-residue polypeptide: GPI-specific phospholipase A2-like PGAP3 (320 aa).

A signal peptide spans 1-23 (MAKRTAPLLLLTLAVGLAGGSQG). The Lumenal segment spans residues 24–98 (DREPVYRDCV…QFHGKWPFSR (75 aa)). Residue Asn40 is glycosylated (N-linked (GlcNAc...) asparagine). Residues 99 to 119 (FLFIQEPASAVASLLNGLASL) traverse the membrane as a helical segment. Residues 120–135 (VMLCRYRASVPASSPM) are Cytoplasmic-facing. The helical transmembrane segment at 136-156 (YHTCMAFAWVSLNAWFWSTVF) threads the bilayer. The Lumenal segment spans residues 157-169 (HTRDTDLTEKMDY). A helical transmembrane segment spans residues 170-190 (FCASAVILHSVYLCCVRTVGL). The Cytoplasmic portion of the chain corresponds to 191–198 (QHPSVASA). A helical membrane pass occupies residues 199–219 (FGALLLLLLTGHISYLSLVHF). Over 220–223 (DYGY) the chain is Lumenal. Residues 224-244 (NMMANVAIGLVNLAWWLVWCL) traverse the membrane as a helical segment. Over 245 to 257 (RNRQRLPHTRRCM) the chain is Cytoplasmic. The helical transmembrane segment at 258 to 278 (VVVVLLQGLSLLELLDFPPLF) threads the bilayer. Trp279 is a topological domain (lumenal). The helical transmembrane segment at 280 to 299 (VLDAHAIWHISTIPVHTLFF) threads the bilayer. Topologically, residues 300–320 (RFLEDDSLYLLKESGAMFKLD) are cytoplasmic.

The protein belongs to the PGAP3 family.

The protein resides in the golgi apparatus membrane. In terms of biological role, involved in the fatty acid remodeling steps of GPI-anchor maturation where the unsaturated acyl chain at sn-2 of inositol phosphate is replaced by a saturated stearoyl chain. May catalyze the first step of the fatty acid remodeling, by removing the unsaturated acyl chain at sn-2 of inositol phosphate, generating a lyso-GPI intermediate. The fatty acid remodeling steps is critical for the integration of GPI-APs into lipid rafts. This chain is GPI-specific phospholipase A2-like PGAP3, found in Mus musculus (Mouse).